A 539-amino-acid polypeptide reads, in one-letter code: MYSNEEPWEGGYDEYGYEMGMPEDGMYDRGYFPMHEDVKKFLMYFCTVIKDGVVYEIQNLYENTFPKLSEQHFEKKAWPSEEEVAHLVDNDNLFLILYKELYYRHLHARIQGGPSLEQRLNSFYNYCNFFNYILPSKEPVQLELPDIWLWELIDEFVYQFQNFAQYRARLTDKTDEEMDMLLNNNSKVWNILCILNVLHSLVSMSKIKDQLEAAAAGKDPEAVAGEFGRHSFYKMLGYFSLVGLLRVHSLLGDYHQAIKVLEPIEIHKKSQYSHIPSCQISTSYYVGFAYMMMRRYSDAIRTFSSILLYIQRTKQLYSARSYQNDQINKQTDQMYHLLAICLVLHPQCIDESIQQVLREKNYHDNMYKMQCGDLDVFRNFFVFACPKFVSPVPPPPDAPIEDYVKDALEHQINVFMDEVKQQQELPTIRSYLKLYTTLPIMKLASFMDRKPQDEVDEQKLENLLTRLLCFKHKMKNVVWTKGSSGLEGKFQSGSELDFYIDKDMIHIADTKVSHRYGDFFIRKVMKFEDLNRRLHAIKG.

The PCI domain occupies 302–514 (TFSSILLYIQ…IHIADTKVSH (213 aa)).

It belongs to the eIF-3 subunit L family. In terms of assembly, component of the eukaryotic translation initiation factor 3 (eIF-3) complex.

The protein resides in the cytoplasm. In terms of biological role, component of the eukaryotic translation initiation factor 3 (eIF-3) complex, which is involved in protein synthesis of a specialized repertoire of mRNAs and, together with other initiation factors, stimulates binding of mRNA and methionyl-tRNAi to the 40S ribosome. The eIF-3 complex specifically targets and initiates translation of a subset of mRNAs involved in cell proliferation. The chain is Eukaryotic translation initiation factor 3 subunit L from Anopheles gambiae (African malaria mosquito).